The following is a 334-amino-acid chain: Ribosomal RNA large subunit methyltransferase F (334 aa).

The disordered stretch occupies residues 1 to 25; sequence MPRPSSPRPDAERKSASPLHPRNRH.

It belongs to the methyltransferase superfamily. METTL16/RlmF family.

It is found in the cytoplasm. It catalyses the reaction adenosine(1618) in 23S rRNA + S-adenosyl-L-methionine = N(6)-methyladenosine(1618) in 23S rRNA + S-adenosyl-L-homocysteine + H(+). Its function is as follows. Specifically methylates the adenine in position 1618 of 23S rRNA. This chain is Ribosomal RNA large subunit methyltransferase F, found in Pseudomonas paraeruginosa (strain DSM 24068 / PA7) (Pseudomonas aeruginosa (strain PA7)).